A 1299-amino-acid chain; its full sequence is MAP3K epsilon protein kinase 1 (1299 aa).

Positions 20–274 constitute a Protein kinase domain; it reads YMLGDEIGKG…AKTLLSHPWI (255 aa). 2 HEAT repeats span residues 25-62 and 86-125; these read EIGK…EDLN and LKTK…TVYI. ATP-binding positions include 26–34 and K49; that span reads IGKGAYGRV. D144 acts as the Proton acceptor in catalysis. An HEAT 3 repeat occupies 218–256; the sequence is PYYDLQPMPALFRIVQDDSPPIPDSLSPDITDFLRQCFK. Disordered regions lie at residues 291 to 458 and 483 to 509; these read IRYM…GNEL and GKLN…DGGK. Low complexity predominate over residues 374-385; sequence SSLQSSTCSISS. Composition is skewed to polar residues over residues 415–432 and 488–501; these read ATKQ…QRSH and ASAS…NQGD. 16 HEAT repeats span residues 532-570, 611-649, 653-694, 698-736, 743-780, 781-820, 868-900, 901-939, 955-994, 998-1036, 1043-1081, 1085-1122, 1125-1164, 1186-1210, 1211-1249, and 1279-1299; these read SNDG…LLPL, VFVT…DNID, NACL…SSSL, MFIA…VFKL, NDFC…SGQL, DQHE…PDGD, QPEQ…HIAG, LEKH…AASA, SDTS…ADTT, YMCS…DPNC, ADAI…INKR, QAAE…ASRN, EQLR…NDNR, CPER…RINT, TLAV…HHPR, and QVLV…NTVL. The segment at 795–852 is disordered; that stretch reads VLKTRPGGGEEPSNSQRSDLYQPDGDRPRSSSAALDATEDVKQHHRISISSNRTSTDK.

Belongs to the protein kinase superfamily. Ser/Thr protein kinase family. Post-translationally, autophosphorylated. Expressed in both the sporophytic and the gametophytic tissues, especially in dividing cells.

The protein localises to the cytoplasm. It localises to the cytoskeleton. Its subcellular location is the microtubule organizing center. It is found in the nucleus. The protein resides in the nucleolus. The protein localises to the cell membrane. The catalysed reaction is L-seryl-[protein] + ATP = O-phospho-L-seryl-[protein] + ADP + H(+). It carries out the reaction L-threonyl-[protein] + ATP = O-phospho-L-threonyl-[protein] + ADP + H(+). Functionally, serine/threonine-protein kinase involved in the spatial and temporal control system organizing cortical activities in mitotic and postmitotic cells. Required for the normal functioning of the plasma membrane in developing pollen. Involved in the regulation of cell expansion and embryo development. This Brassica napus (Rape) protein is MAP3K epsilon protein kinase 1.